The following is a 200-amino-acid chain: 3-isopropylmalate dehydratase small subunit (200 aa).

It belongs to the LeuD family. LeuD type 1 subfamily. As to quaternary structure, heterodimer of LeuC and LeuD.

The enzyme catalyses (2R,3S)-3-isopropylmalate = (2S)-2-isopropylmalate. Its pathway is amino-acid biosynthesis; L-leucine biosynthesis; L-leucine from 3-methyl-2-oxobutanoate: step 2/4. Functionally, catalyzes the isomerization between 2-isopropylmalate and 3-isopropylmalate, via the formation of 2-isopropylmaleate. The chain is 3-isopropylmalate dehydratase small subunit from Erythrobacter litoralis (strain HTCC2594).